The chain runs to 183 residues: Hypoxanthine/guanine phosphoribosyltransferase (183 aa).

This sequence belongs to the purine/pyrimidine phosphoribosyltransferase family. Archaeal HPRT subfamily. In terms of assembly, homodimer.

It is found in the cytoplasm. It catalyses the reaction IMP + diphosphate = hypoxanthine + 5-phospho-alpha-D-ribose 1-diphosphate. The catalysed reaction is GMP + diphosphate = guanine + 5-phospho-alpha-D-ribose 1-diphosphate. It participates in purine metabolism; IMP biosynthesis via salvage pathway; IMP from hypoxanthine: step 1/1. Catalyzes a salvage reaction resulting in the formation of IMP that is energically less costly than de novo synthesis. The sequence is that of Hypoxanthine/guanine phosphoribosyltransferase from Methanotorris igneus (strain DSM 5666 / JCM 11834 / Kol 5).